Here is a 139-residue protein sequence, read N- to C-terminus: Transcription initiation factor IIA small chain homolog (139 aa).

Positions 113–139 (LSAQGPSKRVNRAHAAAAGDDEDDDSD) are disordered.

Belongs to the TFIIA subunit 2 family.

It localises to the nucleus. The protein is Transcription initiation factor IIA small chain homolog of Caenorhabditis elegans.